The primary structure comprises 331 residues: N-arachidonyl glycine receptor (331 aa).

At M1–L26 the chain is on the extracellular side. A glycan (N-linked (GlcNAc...) asparagine) is linked at N14. The chain crosses the membrane as a helical span at residues V27–F47. Residues S48–T56 lie on the Cytoplasmic side of the membrane. The helical transmembrane segment at V57 to F77 threads the bilayer. Residues R78 to H95 are Extracellular-facing. Cysteines 94 and 172 form a disulfide. A helical transmembrane segment spans residues I96–S116. Residues A117 to A138 lie on the Cytoplasmic side of the membrane. A helical transmembrane segment spans residues V139 to L159. Residues Y160–R191 are Extracellular-facing. A glycan (N-linked (GlcNAc...) asparagine) is linked at N188. The helical transmembrane segment at L192 to H212 threads the bilayer. At S213–T236 the chain is on the cytoplasmic side. The helical transmembrane segment at L237–L257 threads the bilayer. Over Q258–G268 the chain is Extracellular. A helical membrane pass occupies residues A269–V289. Topologically, residues S290–L331 are cytoplasmic. Residue S322 is modified to Phosphoserine.

Belongs to the G-protein coupled receptor 1 family. Expressed in the eye including cornea, retina, iris and ciliary epithelium (at protein level). Expressed in spleen, liver and lymphocytes with highest expression levels in intestinal intraepithelial lymphocytes.

The protein resides in the cell membrane. It localises to the cytoplasmic vesicle membrane. Functionally, g protein-coupled receptor (GPCR) that plays a role in diverse physiological processes particularly within the immune and nervous systems. Becomes active when triggered by various endogenous ligands including endocannabinoid N-arachidonyl glycine (NAGly), delta-9-tetrahydrocannabinol or resolvin D2/RvD2 derived from the omega-3 fatty acid docosahexaenoic acid (DHA). Upon RvD2 binding, facilitates the resolution of inflammation, aiding in tissue repair and homeostasis. Mechanistically, RvD2 ligation initiates Galphas protein coupling, activation of cAMP-PKA signaling pathway and phosphorylation of STAT3, leading to RvD2-stimulated macrophage phagocytosis. Mediates NAGly-induced process of reorganization of actin filaments and induction of acrosomal exocytosis. Activation by N-arachidonoyl glycine (NAGly) can also induce apoptosis in macrophages. Plays a role in homeostasis of CD8+ subsets of intraepithelial lymphocytes (IELs) (CD8alphaalpha and CD8alphabeta IELs) in small intestine by supporting preferential migration of CD8alphaalpha T-cells to intraepithelial compartment over lamina propria compartment, and by mediating their reconstitution into small intestine after bone marrow transplant. Also participates in hypotensive responses, mediating reduction in intraocular and blood pressure. The polypeptide is N-arachidonyl glycine receptor (Mus musculus (Mouse)).